Consider the following 201-residue polypeptide: Protein LIGHT-DEPENDENT SHORT HYPOCOTYLS 2 (201 aa).

Positions 1-14 (MDLISQNHNNRNPN) are enriched in polar residues. Disordered stretches follow at residues 1–37 (MDLI…YENQ) and 151–201 (SRGV…GATQ). The segment covering 15 to 32 (TSLSTQTPSSFSSPPSSS) has biased composition (low complexity). An ALOG domain is found at 33-160 (RYENQKRRDW…SRGVSYEKKR (128 aa)). The Nuclear localization signal signature appears at 158–162 (KKRKR).

Belongs to the plant homeotic and developmental regulators ALOG protein family.

It localises to the nucleus. Its function is as follows. Probable transcription regulator that acts as a developmental regulator by promoting cell growth in response to light. This Arabidopsis thaliana (Mouse-ear cress) protein is Protein LIGHT-DEPENDENT SHORT HYPOCOTYLS 2 (LSH2).